Reading from the N-terminus, the 150-residue chain is Large ribosomal subunit protein bL9 (150 aa).

It belongs to the bacterial ribosomal protein bL9 family.

Functionally, binds to the 23S rRNA. This chain is Large ribosomal subunit protein bL9, found in Sodalis glossinidius (strain morsitans).